We begin with the raw amino-acid sequence, 284 residues long: Tropomyosin alpha-1 chain (284 aa).

Positions 1–37 (MDAIKKKMQMLKLDKENALDRAEQAETDKKAAEERSK) are disordered. A coiled-coil region spans residues 1–284 (MDAIKKKMQM…DHALNDMTSI (284 aa)). A compositionally biased stretch (basic and acidic residues) spans 12 to 37 (KLDKENALDRAEQAETDKKAAEERSK).

This sequence belongs to the tropomyosin family. In terms of assembly, homodimer. Heterodimer of an alpha (TPM1, TPM3 or TPM4) and a beta (TPM2) chain.

It localises to the cytoplasm. It is found in the cytoskeleton. Its function is as follows. Binds to actin filaments in muscle and non-muscle cells. Plays a central role, in association with the troponin complex, in the calcium dependent regulation of vertebrate striated muscle contraction. Smooth muscle contraction is regulated by interaction with caldesmon. In non-muscle cells is implicated in stabilizing cytoskeleton actin filaments. The sequence is that of Tropomyosin alpha-1 chain (tpma) from Danio rerio (Zebrafish).